The following is a 92-amino-acid chain: Small ribosomal subunit protein uS19c (92 aa).

It belongs to the universal ribosomal protein uS19 family.

The protein resides in the plastid. The protein localises to the chloroplast. In terms of biological role, protein S19 forms a complex with S13 that binds strongly to the 16S ribosomal RNA. This Thalassiosira pseudonana (Marine diatom) protein is Small ribosomal subunit protein uS19c.